The primary structure comprises 85 residues: Makatoxin-3 (85 aa).

The signal sequence occupies residues 1–19; it reads MNYLIVISFALLLMTGVES. In terms of domain architecture, LCN-type CS-alpha/beta spans 21-83; that stretch reads RDAYIAKKEN…VPIRIPGPCI (63 aa). Disulfide bonds link Cys-31–Cys-82, Cys-35–Cys-55, Cys-41–Cys-65, and Cys-45–Cys-67.

Belongs to the long (4 C-C) scorpion toxin superfamily. Sodium channel inhibitor family. Alpha subfamily. In terms of tissue distribution, expressed by the venom gland.

It localises to the secreted. In terms of biological role, this protein markedly relaxes the rat carbachol-precontracted anococcygeus muscle. This relaxation is inhibited by the inhibitor of nitric oxide (NO) synthase, N-nitro-L-arginine methyl ester (L-NAME), suggesting that the response induced by this protein is NO-mediated. This is Makatoxin-3 from Olivierus martensii (Manchurian scorpion).